The primary structure comprises 85 residues: Colicin-E6 immunity protein (85 aa).

Belongs to the cloacin immunity protein family.

This protein inhibits the 16S RNA hydrolyzing activity of colicin E6 by binding with high affinity to the C-terminal catalytic domain of E6. This protein is able to protect a cell, which harbors the plasmid ColE6 against colicin E6. The polypeptide is Colicin-E6 immunity protein (imm) (Escherichia coli).